The chain runs to 428 residues: MNYLFKNGRYMNEEGKIVATDLLVQDGKIAKVAENITADNAEVIDVNGKLIAPGLVDVHVHLREPGGEHKETIETGTLAAAKGGFTTICAMPNTRPVPDCREHMEDLQNRIKEKAHVNVLPYGAITVRQAGSEMTDFETLKELGAFAFTDDGVGVQDASMMLAAMKRAAKLNMAVVAHCEENTLINKGCVHEGKFSEKHGLNGIPSVCESVHIARDILLAEAADCHYHVCHVSTKGSVRVIRDAKRAGIKVTAEVTPHHLVLCEDDIPSADPNFKMNPPLRGKEDHAALIEGLLDGTIDMIATDHAPHTAEEKAQGIERAPFGITGFETAFPLLYTNLVKKGIITLEQLIQFLTEKPADTFGLEAGRLKEGRTADITIIDLEQEEEIDPTTFLSKGKNTPFAGWKCQGWPVMTIVGGKIAWQKESALV.

Positions 59 and 61 each coordinate Zn(2+). Substrate-binding positions include 61-63 and asparagine 93; that span reads HLR. Residues aspartate 151, histidine 178, and histidine 231 each contribute to the Zn(2+) site. Residue asparagine 277 coordinates substrate. Residue aspartate 304 coordinates Zn(2+). Residue aspartate 304 is part of the active site. Substrate is bound by residues histidine 308 and 322-323; that span reads FG.

The protein belongs to the metallo-dependent hydrolases superfamily. DHOase family. Class I DHOase subfamily. Zn(2+) serves as cofactor.

The enzyme catalyses (S)-dihydroorotate + H2O = N-carbamoyl-L-aspartate + H(+). Its pathway is pyrimidine metabolism; UMP biosynthesis via de novo pathway; (S)-dihydroorotate from bicarbonate: step 3/3. Its function is as follows. Catalyzes the reversible cyclization of carbamoyl aspartate to dihydroorotate. In Bacillus cereus (strain ZK / E33L), this protein is Dihydroorotase.